Reading from the N-terminus, the 448-residue chain is Methylenetetrahydrofolate--tRNA-(uracil-5-)-methyltransferase TrmFO (448 aa).

13–18 (GAGLAG) serves as a coordination point for FAD.

It belongs to the MnmG family. TrmFO subfamily. FAD is required as a cofactor.

It localises to the cytoplasm. The catalysed reaction is uridine(54) in tRNA + (6R)-5,10-methylene-5,6,7,8-tetrahydrofolate + NADH + H(+) = 5-methyluridine(54) in tRNA + (6S)-5,6,7,8-tetrahydrofolate + NAD(+). It carries out the reaction uridine(54) in tRNA + (6R)-5,10-methylene-5,6,7,8-tetrahydrofolate + NADPH + H(+) = 5-methyluridine(54) in tRNA + (6S)-5,6,7,8-tetrahydrofolate + NADP(+). In terms of biological role, catalyzes the folate-dependent formation of 5-methyl-uridine at position 54 (M-5-U54) in all tRNAs. In Streptococcus pyogenes serotype M1, this protein is Methylenetetrahydrofolate--tRNA-(uracil-5-)-methyltransferase TrmFO.